The sequence spans 460 residues: Asparagine--tRNA ligase (460 aa).

It belongs to the class-II aminoacyl-tRNA synthetase family. As to quaternary structure, homodimer.

Its subcellular location is the cytoplasm. The enzyme catalyses tRNA(Asn) + L-asparagine + ATP = L-asparaginyl-tRNA(Asn) + AMP + diphosphate + H(+). In Picosynechococcus sp. (strain ATCC 27264 / PCC 7002 / PR-6) (Agmenellum quadruplicatum), this protein is Asparagine--tRNA ligase.